The sequence spans 576 residues: V-type ATP synthase alpha chain (576 aa).

Position 238 to 245 (238 to 245) interacts with ATP; that stretch reads GPFGAGKT.

It belongs to the ATPase alpha/beta chains family.

It catalyses the reaction ATP + H2O + 4 H(+)(in) = ADP + phosphate + 5 H(+)(out). Its function is as follows. Produces ATP from ADP in the presence of a proton gradient across the membrane. The V-type alpha chain is a catalytic subunit. This is V-type ATP synthase alpha chain from Borrelia duttonii (strain Ly).